The following is a 444-amino-acid chain: Cell wall mannoprotein PST1 (444 aa).

Residues 1–19 (MQLHSLIASTALLITSALA) form the signal peptide. Asn57, Asn76, Asn83, Asn86, Asn196, Asn210, Asn228, Asn235, Asn242, Asn263, Asn268, Asn280, Asn292, Asn305, and Asn329 each carry an N-linked (GlcNAc...) asparagine glycan. 2 stretches are compositionally biased toward low complexity: residues 359 to 381 (SVKL…SKSS) and 395 to 417 (KAAA…KSSK). Residues 359-418 (SVKLSSTSKSQSSQTTAKVSKSSSKAEEKKFTSGDIKAAASASSVSSSSASSSSSKSSKG) form a disordered region. Asn419 carries the GPI-anchor amidated asparagine lipid modification. Residues 420–444 (AAIMAPIGQTTPLVGLLTAIIMSIM) constitute a propeptide, removed in mature form.

Belongs to the SPS2 family. In terms of processing, extensively N- and O-mannosylated.

The protein localises to the cell membrane. It is found in the secreted. It localises to the cell wall. In terms of biological role, has a partially redundant function to ECM33 in cell wall integrity. May be involved in a repair mechanism activated in response to cell wall damage. This Saccharomyces cerevisiae (strain YJM789) (Baker's yeast) protein is Cell wall mannoprotein PST1 (PST1).